Here is a 558-residue protein sequence, read N- to C-terminus: Sinalpyl alcohol oxidase Nec3 (558 aa).

The first 28 residues, M1–A28, serve as a signal peptide directing secretion. T64–A65 serves as a coordination point for FAD. N-linked (GlcNAc...) asparagine glycosylation occurs at N76. Residues E83–R84, V131, S135, and N139–F142 each bind FAD. N-linked (GlcNAc...) asparagine glycosylation is present at N180. V247 is a binding site for FAD. N-linked (GlcNAc...) asparagine glycans are attached at residues N308, N386, and N473. Residues C433 and C484 are joined by a disulfide bond. Y492–H493 is a binding site for FAD. H493 functions as the Proton donor in the catalytic mechanism. The Proton acceptor role is filled by N531. P532–Q533 contributes to the FAD binding site.

It belongs to the GMC oxidoreductase family. Monomer. FAD is required as a cofactor. Confined to nectaries.

It carries out the reaction (E)-sinapyl alcohol + O2 = (E)-sinapaldehyde + H2O2. The protein operates within alkaloid biosynthesis. In terms of biological role, involved in the production of blood-red nectar containing the alkaloid nesocodin and that serves as a visual attractant for pollinator visitation, including vertebrates such as Phelsuma geckos. The nectar is initially acidic and pale yellow, but slowly becomes alkaline before turning into red within 24 hours. Together with NEC1 and NEC2, facilitates the condensation of sinapaldehyde ((E)-3,5-dimethoxy-4-hydroxycinnamaldehyde) and proline to form nesocodin, a pigment with a stable imine bond. Catalyzes the conversion of sinapyl alcohol to sinapaldehyde. This chain is Sinalpyl alcohol oxidase Nec3, found in Nesocodon mauritianus (Blue Mauritius bellflower).